The following is a 108-amino-acid chain: MSETFTEISPHQAWELIENEGATLADIRDGRRYAYSHPQDAFHLTNESYGRFLDEVDYEEPVIVMCYHGVSSRNTAQFLVEQGFDRVYSVKGGFDGWERSGLPIETAY.

The region spanning 18–106 (ENEGATLADI…WERSGLPIET (89 aa)) is the Rhodanese domain. The active-site Cysteine persulfide intermediate is the C66.

The protein belongs to the GlpE family.

The protein localises to the cytoplasm. It carries out the reaction thiosulfate + hydrogen cyanide = thiocyanate + sulfite + 2 H(+). The catalysed reaction is thiosulfate + [thioredoxin]-dithiol = [thioredoxin]-disulfide + hydrogen sulfide + sulfite + 2 H(+). Transferase that catalyzes the transfer of sulfur from thiosulfate to thiophilic acceptors such as cyanide or dithiols. May function in a CysM-independent thiosulfate assimilation pathway by catalyzing the conversion of thiosulfate to sulfite, which can then be used for L-cysteine biosynthesis. This is Thiosulfate sulfurtransferase GlpE from Actinobacillus pleuropneumoniae serotype 5b (strain L20).